The primary structure comprises 404 residues: Dihydroorotase (404 aa).

Zn(2+) contacts are provided by His-57 and His-59. Substrate is bound by residues 59-61 (HLR) and Asn-91. Zn(2+) contacts are provided by Lys-135, His-164, His-204, and Asp-272. N6-carboxylysine is present on Lys-135. The active site involves Asp-272. Residues His-276 and 286 to 287 (AG) contribute to the substrate site.

It belongs to the metallo-dependent hydrolases superfamily. DHOase family. Class I DHOase subfamily. It depends on Zn(2+) as a cofactor.

It carries out the reaction (S)-dihydroorotate + H2O = N-carbamoyl-L-aspartate + H(+). The protein operates within pyrimidine metabolism; UMP biosynthesis via de novo pathway; (S)-dihydroorotate from bicarbonate: step 3/3. Catalyzes the reversible cyclization of carbamoyl aspartate to dihydroorotate. This Pyrococcus abyssi (strain GE5 / Orsay) protein is Dihydroorotase.